The sequence spans 180 residues: Cytidylate kinase (180 aa).

7 to 15 (GPPGSGKST) lines the ATP pocket.

The protein belongs to the cytidylate kinase family. Type 2 subfamily.

It localises to the cytoplasm. It carries out the reaction CMP + ATP = CDP + ADP. The catalysed reaction is dCMP + ATP = dCDP + ADP. The polypeptide is Cytidylate kinase (Sulfurisphaera tokodaii (strain DSM 16993 / JCM 10545 / NBRC 100140 / 7) (Sulfolobus tokodaii)).